The primary structure comprises 196 residues: Dimiconin (196 aa).

The first 21 residues, 1 to 21 (MKTIIVVTIFGILTCAYPTDG), serve as a signal peptide directing secretion. Residues asparagine 62 and asparagine 187 are each glycosylated (N-linked (GlcNAc...) asparagine).

It belongs to the calycin superfamily. Triabin family. In terms of tissue distribution, salivary gland.

The protein localises to the secreted. Functionally, inhibits the intrinsic blood coagulation pathway by blocking the activation of host coagulation factor XII (F12) but not the enzymatic activity of activated F12. This chain is Dimiconin, found in Triatoma dimidiata (Kissing bug).